A 157-amino-acid polypeptide reads, in one-letter code: S-ribosylhomocysteine lyase (157 aa).

Fe cation contacts are provided by His-60, His-64, and Cys-127.

This sequence belongs to the LuxS family. Homodimer. The cofactor is Fe cation.

It carries out the reaction S-(5-deoxy-D-ribos-5-yl)-L-homocysteine = (S)-4,5-dihydroxypentane-2,3-dione + L-homocysteine. Functionally, involved in the synthesis of autoinducer 2 (AI-2) which is secreted by bacteria and is used to communicate both the cell density and the metabolic potential of the environment. The regulation of gene expression in response to changes in cell density is called quorum sensing. Catalyzes the transformation of S-ribosylhomocysteine (RHC) to homocysteine (HC) and 4,5-dihydroxy-2,3-pentadione (DPD). The polypeptide is S-ribosylhomocysteine lyase (Helicobacter acinonychis (strain Sheeba)).